The following is a 380-amino-acid chain: MDFEQLKQDVIAYSKTIGIDKIGFASASPFEELKQRLIQQQQLNYQSGFEEPDIEKRTNPQLLLPGAKSIIAIALAYPSKLKNAPLSKRGERRGIFCRASWGQDYHLVLRDRLQKLEAYLIEKLPDIEVKSMVDTGELSDRAVSERAGIGWSGKNCSIITPEFGSYVYLGEMITNVPFPPDKPIEDQCGGCTKCIDICPTGALIQGGQLDSKKCIAFLTQTKGFLPEEYRDKIGNRIYGCDTCQTVCPKNKGMDFHNHPEMEPDPELVKPLLTPLLTISNRDFKEKYGIMSGSWRGKKPLQRNAILALAHFKEASAIPDLIGVMKDDPRPVLRGTAAWALGKIGGDGVGEAIEKAMEREKDEEVLHEMNRGLELLAQKKE.

Asp134 acts as the Proton donor in catalysis. One can recognise a 4Fe-4S ferredoxin-type 1 domain in the interval 178–208 (FPPDKPIEDQCGGCTKCIDICPTGALIQGGQ). [4Fe-4S] cluster is bound by residues Cys188, Cys191, Cys194, Cys198, Cys214, Cys240, Cys243, and Cys247. The region spanning 226-258 (PEEYRDKIGNRIYGCDTCQTVCPKNKGMDFHNH) is the 4Fe-4S ferredoxin-type 2 domain.

Belongs to the QueG family. In terms of assembly, monomer. Requires cob(II)alamin as cofactor. [4Fe-4S] cluster is required as a cofactor.

It is found in the cytoplasm. The enzyme catalyses epoxyqueuosine(34) in tRNA + AH2 = queuosine(34) in tRNA + A + H2O. Its pathway is tRNA modification; tRNA-queuosine biosynthesis. Functionally, catalyzes the conversion of epoxyqueuosine (oQ) to queuosine (Q), which is a hypermodified base found in the wobble positions of tRNA(Asp), tRNA(Asn), tRNA(His) and tRNA(Tyr). The polypeptide is Epoxyqueuosine reductase (Bacillus cereus (strain ATCC 14579 / DSM 31 / CCUG 7414 / JCM 2152 / NBRC 15305 / NCIMB 9373 / NCTC 2599 / NRRL B-3711)).